Reading from the N-terminus, the 469-residue chain is Crinkler effector protein 1 (469 aa).

Residues 1–17 (MSITLLCLIKGNTLANA) form the signal peptide. The LQLFLAK-like domain stretch occupies residues 18-57 (FPVDIDKDQLVGHLKKVIKAEQPQTFANVDAKDLKLWRVP). The tract at residues 58–96 (ISDDHDDQLRNLSLEDSDELLAIRKISKYFPDSPPEECI) is DWL domain. N-linked (GlcNAc...) asparagine glycosylation is present at asparagine 68. The HVLVXXP motif motif lies at 97 to 103 (HVLVEPP). N-linked (GlcNAc...) asparagine glycans are attached at residues asparagine 126, asparagine 181, and asparagine 248.

This sequence belongs to the Crinkler effector family. As to quaternary structure, homodimer.

Its subcellular location is the secreted. The protein resides in the host nucleus. In terms of biological role, effector that participates in the arbuscule development step of the symbiosis. Arbuscular mycorrhizal (AM) symbiosis is one of the most prominent and beneficial plant-microbe interactions that facilitates mineral nutrition and confers tolerance to biotic and abiotic stresses. Is not involved in cell death processes. In Rhizophagus irregularis (strain DAOM 181602 / DAOM 197198 / MUCL 43194) (Arbuscular mycorrhizal fungus), this protein is Crinkler effector protein 1.